Reading from the N-terminus, the 40-residue chain is Photosystem II reaction center protein J (40 aa).

The helical transmembrane segment at 8–28 threads the bilayer; it reads IPLWLIGTVTGILVIGLLGIF.

It belongs to the PsbJ family. In terms of assembly, PSII is composed of 1 copy each of membrane proteins PsbA, PsbB, PsbC, PsbD, PsbE, PsbF, PsbH, PsbI, PsbJ, PsbK, PsbL, PsbM, PsbT, PsbX, PsbY, PsbZ, Psb30/Ycf12, at least 3 peripheral proteins of the oxygen-evolving complex and a large number of cofactors. It forms dimeric complexes.

Its subcellular location is the plastid. The protein localises to the chloroplast thylakoid membrane. Functionally, one of the components of the core complex of photosystem II (PSII). PSII is a light-driven water:plastoquinone oxidoreductase that uses light energy to abstract electrons from H(2)O, generating O(2) and a proton gradient subsequently used for ATP formation. It consists of a core antenna complex that captures photons, and an electron transfer chain that converts photonic excitation into a charge separation. This chain is Photosystem II reaction center protein J, found in Angiopteris evecta (Mule's foot fern).